The sequence spans 88 residues: UPF0250 protein Shew_2940 (88 aa).

Belongs to the UPF0250 family.

The sequence is that of UPF0250 protein Shew_2940 from Shewanella loihica (strain ATCC BAA-1088 / PV-4).